The chain runs to 944 residues: Neutral alpha-glucosidase AB (944 aa).

Residues 1-32 (MAAVAAVAARRRRSWTGLVLACLGVCLGLTLA) form the signal peptide. A disulfide bridge connects residues Cys-41 and Cys-47. At Ser-52 the chain carries Phosphoserine. Asn-97 is a glycosylation site (N-linked (GlcNAc...) asparagine). Residues 181–225 (QRAPRVSQGSKDPAEGDGAQPEEAPGDGDKPEEIQGKAEKDEPGA) are disordered. A compositionally biased stretch (basic and acidic residues) spans 207–225 (DGDKPEEIQGKAEKDEPGA). Substrate contacts are provided by Asp-283 and Asp-429. Asp-542 functions as the Nucleophile in the catalytic mechanism. Arg-602 is a substrate binding site. Asp-618 serves as the catalytic Proton donor. A disulfide bridge connects residues Cys-633 and Cys-644. His-676 contacts substrate.

This sequence belongs to the glycosyl hydrolase 31 family. Heterodimer of a catalytic alpha subunit (GANAB) and a beta subunit (PRKCSH). Binds glycosylated PTPRC. In terms of processing, contains sialylated polysaccharide chains.

The protein localises to the endoplasmic reticulum. The protein resides in the golgi apparatus. It localises to the melanosome. The catalysed reaction is N(4)-(alpha-D-Glc-(1-&gt;3)-alpha-D-Man-(1-&gt;2)-alpha-D-Man-(1-&gt;2)-alpha-D-Man-(1-&gt;3)-[alpha-D-Man-(1-&gt;2)-alpha-D-Man-(1-&gt;3)-[alpha-D-Man-(1-&gt;2)-alpha-D-Man-(1-&gt;6)]-alpha-D-Man-(1-&gt;6)]-beta-D-Man-(1-&gt;4)-beta-D-GlcNAc-(1-&gt;4)-beta-D-GlcNAc)-L-asparaginyl-[protein] + H2O = N(4)-(alpha-D-Man-(1-&gt;2)-alpha-D-Man-(1-&gt;2)-alpha-D-Man-(1-&gt;3)-[alpha-D-Man-(1-&gt;2)-alpha-D-Man-(1-&gt;3)-[alpha-D-Man-(1-&gt;2)-alpha-D-Man-(1-&gt;6)]-alpha-D-Man-(1-&gt;6)]-beta-D-Man-(1-&gt;4)-beta-D-GlcNAc-(1-&gt;4)-beta-D-GlcNAc)-L-asparaginyl-[protein] (N-glucan mannose isomer 9A1,2,3B1,2,3) + beta-D-glucose. It catalyses the reaction N(4)-(alpha-D-Glc-(1-&gt;3)-alpha-D-Glc-(1-&gt;3)-alpha-D-Man-(1-&gt;2)-alpha-D-Man-(1-&gt;2)-alpha-D-Man-(1-&gt;3)-[alpha-D-Man-(1-&gt;2)-alpha-D-Man-(1-&gt;3)-[alpha-D-Man-(1-&gt;2)-alpha-D-Man-(1-&gt;6)]-alpha-D-Man-(1-&gt;6)]-beta-D-Man-(1-&gt;4)-beta-D-GlcNAc-(1-&gt;4)-beta-D-GlcNAc)-L-asparaginyl-[protein] + H2O = N(4)-(alpha-D-Glc-(1-&gt;3)-alpha-D-Man-(1-&gt;2)-alpha-D-Man-(1-&gt;2)-alpha-D-Man-(1-&gt;3)-[alpha-D-Man-(1-&gt;2)-alpha-D-Man-(1-&gt;3)-[alpha-D-Man-(1-&gt;2)-alpha-D-Man-(1-&gt;6)]-alpha-D-Man-(1-&gt;6)]-beta-D-Man-(1-&gt;4)-beta-D-GlcNAc-(1-&gt;4)-beta-D-GlcNAc)-L-asparaginyl-[protein] + beta-D-glucose. It participates in glycan metabolism; N-glycan metabolism. Functionally, catalytic subunit of glucosidase II that cleaves sequentially the 2 innermost alpha-1,3-linked glucose residues from the Glc(2)Man(9)GlcNAc(2) oligosaccharide precursor of immature glycoproteins. Required for PKD1/Polycystin-1 and PKD2/Polycystin-2 maturation and localization to the cell surface and cilia. The sequence is that of Neutral alpha-glucosidase AB (GANAB) from Sus scrofa (Pig).